Reading from the N-terminus, the 383-residue chain is Probable cell wall hydrolase LytN (383 aa).

A signal peptide spans 1-49 (MFIYYCKECSIMNKQQSKVRYSIRKVSIGILSISIGMFLALGMSNKAYA). Positions 175–219 (QIYTVKKGDTLSAIALKYKTTVSNIQNTNNIANPNLIFIGQKLKV) constitute a LysM domain. The Peptidase C51 domain occupies 241 to 378 (NSSTLNYLKT…NYENDMIFIR (138 aa)).

Its subcellular location is the secreted. Its function is as follows. Probably involved in peptidoglycan hydrolysis. This Staphylococcus aureus (strain Mu50 / ATCC 700699) protein is Probable cell wall hydrolase LytN (lytN).